Reading from the N-terminus, the 91-residue chain is MGSLKLSTFAIVVCLSILLISPIEVNGWGKCDLRKGLCRLADTISTCDVPCRAVDSKYHGGECLNVGGGQGICWCCRDYDAAKSGAEKESM.

The N-terminal stretch at 1-27 is a signal peptide; the sequence is MGSLKLSTFAIVVCLSILLISPIEVNG. Cystine bridges form between Cys31–Cys76, Cys38–Cys63, Cys47–Cys73, and Cys51–Cys75.

It belongs to the DEFL family.

It localises to the secreted. This chain is Defensin-like protein 95, found in Arabidopsis thaliana (Mouse-ear cress).